We begin with the raw amino-acid sequence, 269 residues long: 3-deoxy-manno-octulosonate cytidylyltransferase (269 aa).

It belongs to the KdsB family.

It localises to the cytoplasm. It catalyses the reaction 3-deoxy-alpha-D-manno-oct-2-ulosonate + CTP = CMP-3-deoxy-beta-D-manno-octulosonate + diphosphate. The protein operates within nucleotide-sugar biosynthesis; CMP-3-deoxy-D-manno-octulosonate biosynthesis; CMP-3-deoxy-D-manno-octulosonate from 3-deoxy-D-manno-octulosonate and CTP: step 1/1. It functions in the pathway bacterial outer membrane biogenesis; lipopolysaccharide biosynthesis. Functionally, activates KDO (a required 8-carbon sugar) for incorporation into bacterial lipopolysaccharide in Gram-negative bacteria. The protein is 3-deoxy-manno-octulosonate cytidylyltransferase of Cupriavidus taiwanensis (strain DSM 17343 / BCRC 17206 / CCUG 44338 / CIP 107171 / LMG 19424 / R1) (Ralstonia taiwanensis (strain LMG 19424)).